The following is a 463-amino-acid chain: ATP-dependent protease ATPase subunit HslU (463 aa).

Residues isoleucine 19, glycine 61 to glutamate 66, aspartate 277, glutamate 341, and arginine 413 each bind ATP.

The protein belongs to the ClpX chaperone family. HslU subfamily. As to quaternary structure, a double ring-shaped homohexamer of HslV is capped on each side by a ring-shaped HslU homohexamer. The assembly of the HslU/HslV complex is dependent on binding of ATP.

Its subcellular location is the cytoplasm. Its function is as follows. ATPase subunit of a proteasome-like degradation complex; this subunit has chaperone activity. The binding of ATP and its subsequent hydrolysis by HslU are essential for unfolding of protein substrates subsequently hydrolyzed by HslV. HslU recognizes the N-terminal part of its protein substrates and unfolds these before they are guided to HslV for hydrolysis. This is ATP-dependent protease ATPase subunit HslU from Bacillus cereus (strain 03BB102).